The following is a 147-amino-acid chain: Protein LOL1 (147 aa).

Residues 1 to 38 are disordered; it reads MVASRAPRSESPWLKKPMHGVSGSTAMASTPWSSMPPS. Over residues 22–38 the composition is skewed to polar residues; the sequence is SGSTAMASTPWSSMPPS. The segment at 47-77 is putative zinc finger; that stretch reads QLVCSGCRNLLMYPAGATSICCAVCGTVTAV.

The protein localises to the nucleus. In terms of biological role, putative zinc finger that may be involved in programmed cell death and defense response. The chain is Protein LOL1 (LOL1) from Oryza sativa subsp. japonica (Rice).